We begin with the raw amino-acid sequence, 291 residues long: ATP synthase gamma chain (291 aa).

Belongs to the ATPase gamma chain family. In terms of assembly, F-type ATPases have 2 components, CF(1) - the catalytic core - and CF(0) - the membrane proton channel. CF(1) has five subunits: alpha(3), beta(3), gamma(1), delta(1), epsilon(1). CF(0) has three main subunits: a, b and c.

The protein resides in the cell membrane. In terms of biological role, produces ATP from ADP in the presence of a proton gradient across the membrane. The gamma chain is believed to be important in regulating ATPase activity and the flow of protons through the CF(0) complex. This Streptococcus pyogenes serotype M1 protein is ATP synthase gamma chain.